Consider the following 398-residue polypeptide: Acetate kinase 1 (398 aa).

Residue N10 participates in Mg(2+) binding. An ATP-binding site is contributed by K17. R89 serves as a coordination point for substrate. D146 serves as the catalytic Proton donor/acceptor. ATP is bound by residues H206–G210, D281–R283, and G329–N333. Mg(2+) is bound at residue E384.

The protein belongs to the acetokinase family. Homodimer. It depends on Mg(2+) as a cofactor. The cofactor is Mn(2+).

Its subcellular location is the cytoplasm. It catalyses the reaction acetate + ATP = acetyl phosphate + ADP. It functions in the pathway metabolic intermediate biosynthesis; acetyl-CoA biosynthesis; acetyl-CoA from acetate: step 1/2. Catalyzes the formation of acetyl phosphate from acetate and ATP. Can also catalyze the reverse reaction. This is Acetate kinase 1 from Neisseria meningitidis serogroup A / serotype 4A (strain DSM 15465 / Z2491).